The chain runs to 232 residues: Phosphatidylserine decarboxylase proenzyme (232 aa).

The active-site Schiff-base intermediate with substrate; via pyruvic acid is the S190. S190 is modified (pyruvic acid (Ser); by autocatalysis).

Belongs to the phosphatidylserine decarboxylase family. PSD-A subfamily. In terms of assembly, heterodimer of a large membrane-associated beta subunit and a small pyruvoyl-containing alpha subunit. Pyruvate is required as a cofactor. Post-translationally, is synthesized initially as an inactive proenzyme. Formation of the active enzyme involves a self-maturation process in which the active site pyruvoyl group is generated from an internal serine residue via an autocatalytic post-translational modification. Two non-identical subunits are generated from the proenzyme in this reaction, and the pyruvate is formed at the N-terminus of the alpha chain, which is derived from the carboxyl end of the proenzyme. The post-translation cleavage follows an unusual pathway, termed non-hydrolytic serinolysis, in which the side chain hydroxyl group of the serine supplies its oxygen atom to form the C-terminus of the beta chain, while the remainder of the serine residue undergoes an oxidative deamination to produce ammonia and the pyruvoyl prosthetic group on the alpha chain.

Its subcellular location is the cell membrane. It carries out the reaction a 1,2-diacyl-sn-glycero-3-phospho-L-serine + H(+) = a 1,2-diacyl-sn-glycero-3-phosphoethanolamine + CO2. The protein operates within phospholipid metabolism; phosphatidylethanolamine biosynthesis; phosphatidylethanolamine from CDP-diacylglycerol: step 2/2. Catalyzes the formation of phosphatidylethanolamine (PtdEtn) from phosphatidylserine (PtdSer). The sequence is that of Phosphatidylserine decarboxylase proenzyme from Cereibacter sphaeroides (strain KD131 / KCTC 12085) (Rhodobacter sphaeroides).